Here is a 381-residue protein sequence, read N- to C-terminus: Creatine kinase M-type (381 aa).

The Phosphagen kinase N-terminal domain occupies 11 to 98; it reads KLNYKPEEEY…FDPIISDRHG (88 aa). The Phosphagen kinase C-terminal domain maps to 125-367; that stretch reads YVLSSRVRTG…KLMVEMEKKL (243 aa). 128 to 132 lines the ATP pocket; it reads SSRVR. Ser164 carries the post-translational modification Phosphoserine. Thr166 is modified (phosphothreonine). Ser178 is modified (phosphoserine). Position 180 is a phosphothreonine (Thr180). ATP is bound at residue His191. A Phosphoserine modification is found at Ser199. Arg236 and Arg292 together coordinate ATP. Thr313 and Thr322 each carry phosphothreonine. ATP is bound by residues 320–325 and Asp335; that span reads RGTGGV. The residue at position 372 (Ser372) is a Phosphoserine.

This sequence belongs to the ATP:guanido phosphotransferase family. Dimer of identical or non-identical chains, which can be either B (brain type) or M (muscle type). With MM being the major form in skeletal muscle and myocardium, MB existing in myocardium, and BB existing in many tissues, especially brain.

The protein localises to the cytoplasm. The catalysed reaction is creatine + ATP = N-phosphocreatine + ADP + H(+). Reversibly catalyzes the transfer of phosphate between ATP and various phosphogens (e.g. creatine phosphate). Creatine kinase isoenzymes play a central role in energy transduction in tissues with large, fluctuating energy demands, such as skeletal muscle, heart, brain and spermatozoa. The sequence is that of Creatine kinase M-type (CKM) from Homo sapiens (Human).